A 258-amino-acid polypeptide reads, in one-letter code: Aspartate/glutamate leucyltransferase (258 aa).

It belongs to the R-transferase family. Bpt subfamily.

It is found in the cytoplasm. It catalyses the reaction N-terminal L-glutamyl-[protein] + L-leucyl-tRNA(Leu) = N-terminal L-leucyl-L-glutamyl-[protein] + tRNA(Leu) + H(+). It carries out the reaction N-terminal L-aspartyl-[protein] + L-leucyl-tRNA(Leu) = N-terminal L-leucyl-L-aspartyl-[protein] + tRNA(Leu) + H(+). Its function is as follows. Functions in the N-end rule pathway of protein degradation where it conjugates Leu from its aminoacyl-tRNA to the N-termini of proteins containing an N-terminal aspartate or glutamate. This chain is Aspartate/glutamate leucyltransferase, found in Rhizobium johnstonii (strain DSM 114642 / LMG 32736 / 3841) (Rhizobium leguminosarum bv. viciae).